We begin with the raw amino-acid sequence, 240 residues long: Lipoprotein-releasing system ATP-binding protein LolD (240 aa).

Positions Ile15–Val240 constitute an ABC transporter domain. An ATP-binding site is contributed by Gly51–Ser58.

Belongs to the ABC transporter superfamily. Lipoprotein translocase (TC 3.A.1.125) family. In terms of assembly, the complex is composed of two ATP-binding proteins (LolD) and two transmembrane proteins (LolC and LolE).

Its subcellular location is the cell inner membrane. Its function is as follows. Part of the ABC transporter complex LolCDE involved in the translocation of mature outer membrane-directed lipoproteins, from the inner membrane to the periplasmic chaperone, LolA. Responsible for the formation of the LolA-lipoprotein complex in an ATP-dependent manner. This Xylella fastidiosa (strain Temecula1 / ATCC 700964) protein is Lipoprotein-releasing system ATP-binding protein LolD.